Here is a 127-residue protein sequence, read N- to C-terminus: Glycine cleavage system H protein 2 (127 aa).

Positions 24–105 (SVTVGISDHA…PYGSWIFKLK (82 aa)) constitute a Lipoyl-binding domain. The residue at position 65 (Lys-65) is an N6-lipoyllysine.

This sequence belongs to the GcvH family. In terms of assembly, the glycine cleavage system is composed of four proteins: P, T, L and H. The cofactor is (R)-lipoate.

In terms of biological role, the glycine cleavage system catalyzes the degradation of glycine. The H protein shuttles the methylamine group of glycine from the P protein to the T protein. In Pseudomonas putida (strain ATCC 47054 / DSM 6125 / CFBP 8728 / NCIMB 11950 / KT2440), this protein is Glycine cleavage system H protein 2.